The following is a 159-amino-acid chain: MRRDETIYILRPTMSEEHINTVIENTNKIILDDAGTIIFYEPSGAUKSLLTUSRKSSQGYYVYCDYAGTPAAVSEMERRFRIEDAVLKYMTVKLSEDISAEEIQQAIGDIAAREAAVKEAAEAEEAANEEVVEKVVEKVAEKAAEKTVEEAAPVKETEE.

Non-standard amino acids (selenocysteine) are located at Sec-46 and Sec-52.

Belongs to the bacterial ribosomal protein bS6 family.

Its function is as follows. Binds together with bS18 to 16S ribosomal RNA. This is Small ribosomal subunit protein bS6 from Desulfotalea psychrophila (strain LSv54 / DSM 12343).